We begin with the raw amino-acid sequence, 359 residues long: Sulfate/thiosulfate import ATP-binding protein CysA (359 aa).

Positions 3–237 (VRVAGVRKEF…PNSPFVYGFI (235 aa)) constitute an ABC transporter domain. 35 to 42 (GPSGSGKT) contacts ATP.

The protein belongs to the ABC transporter superfamily. Sulfate/tungstate importer (TC 3.A.1.6) family. As to quaternary structure, the complex is composed of two ATP-binding proteins (CysA), two transmembrane proteins (CysT and CysW) and a solute-binding protein (CysP).

It is found in the cell inner membrane. The catalysed reaction is sulfate(out) + ATP + H2O = sulfate(in) + ADP + phosphate + H(+). The enzyme catalyses thiosulfate(out) + ATP + H2O = thiosulfate(in) + ADP + phosphate + H(+). Its function is as follows. Part of the ABC transporter complex CysAWTP involved in sulfate/thiosulfate import. Responsible for energy coupling to the transport system. The protein is Sulfate/thiosulfate import ATP-binding protein CysA of Brucella melitensis biotype 1 (strain ATCC 23456 / CCUG 17765 / NCTC 10094 / 16M).